Reading from the N-terminus, the 430-residue chain is DD-carboxypeptidase/endopeptidase Mpg (430 aa).

Residues His-295, Asp-299, and His-375 each coordinate Zn(2+).

It belongs to the peptidase M23B family. In terms of assembly, monomer. Requires Zn(2+) as cofactor. In terms of processing, likely to be synthesized as a proenzyme. The cleavage of the N-terminal domain is probably required for the activation of the enzyme.

The protein localises to the cell outer membrane. Peptidoglycan (PG) degradation activity is completely inhibited by zinc chelating EDTA and phenanthroline. Its function is as follows. Has both endopeptidase and DD-carboxypeptidase activities. Degrades cell wall peptidoglycan (PG) to allow consummate expression of pili. Degrades N.gonorrhoeae and E.coli PG side chains in vitro. Required for proper piliation, which in turn is required for normal colony morphology, resistance to H(2)O(2) damage and defense against killing by human polymorphonuclear leukocytes (PMNs). Involved in type IV pilus biogenesis. Involved in resistance against non-oxidative killing by adherent CXCL8/IL8-primed human PMNs. Protects from killing by PMN-produced antimicrobial factors, which kill by a mechanism completely independent of reactive oxygen species (ROS) production of the PMNs. Provides protection against oxidative damage caused by peroxides H(2)O(2) and cumene hydroperoxide in vitro. In Neisseria gonorrhoeae (strain ATCC 700825 / FA 1090), this protein is DD-carboxypeptidase/endopeptidase Mpg.